Here is a 505-residue protein sequence, read N- to C-terminus: Glycerol kinase 1 (505 aa).

T13 is a binding site for ADP. T13, T14, and S15 together coordinate ATP. Residue T13 coordinates sn-glycerol 3-phosphate. Position 17 (R17) interacts with ADP. The sn-glycerol 3-phosphate site is built by R83, E84, and Y135. The glycerol site is built by R83, E84, and Y135. H231 is subject to Phosphohistidine; by HPr. Residue D245 coordinates sn-glycerol 3-phosphate. The glycerol site is built by D245 and Q246. ADP-binding residues include T267 and G310. 4 residues coordinate ATP: T267, G310, Q314, and G411. ADP contacts are provided by G411 and N415.

It belongs to the FGGY kinase family. In terms of assembly, homotetramer and homodimer (in equilibrium). Post-translationally, the phosphoenolpyruvate-dependent sugar phosphotransferase system (PTS), including enzyme I, and histidine-containing protein (HPr) are required for the phosphorylation, which leads to the activation of the enzyme.

The catalysed reaction is glycerol + ATP = sn-glycerol 3-phosphate + ADP + H(+). The protein operates within polyol metabolism; glycerol degradation via glycerol kinase pathway; sn-glycerol 3-phosphate from glycerol: step 1/1. Its activity is regulated as follows. Activated by phosphorylation and inhibited by fructose 1,6-bisphosphate (FBP). Functionally, key enzyme in the regulation of glycerol uptake and metabolism. Catalyzes the phosphorylation of glycerol to yield sn-glycerol 3-phosphate. The polypeptide is Glycerol kinase 1 (Lactiplantibacillus plantarum (strain ATCC BAA-793 / NCIMB 8826 / WCFS1) (Lactobacillus plantarum)).